Reading from the N-terminus, the 558-residue chain is Factor VII-activating protease (558 aa).

An N-terminal signal peptide occupies residues 1–23 (MSVVMLVFRVLLLIALVGNSAIG). EGF-like domains follow at residues 71 to 107 (DDDP…SRCQ), 109 to 146 (VQNK…PDCS), and 148 to 186 (VLPV…RFCE). 18 disulfide bridges follow: cysteine 75–cysteine 86, cysteine 80–cysteine 95, cysteine 97–cysteine 106, cysteine 113–cysteine 123, cysteine 118–cysteine 134, cysteine 136–cysteine 145, cysteine 152–cysteine 163, cysteine 157–cysteine 174, cysteine 176–cysteine 185, cysteine 192–cysteine 274, cysteine 213–cysteine 255, cysteine 244–cysteine 269, cysteine 299–cysteine 433, cysteine 345–cysteine 361, cysteine 353–cysteine 422, cysteine 445–cysteine 513, cysteine 475–cysteine 491, and cysteine 503–cysteine 531. The region spanning 191–274 (DCYVGDGYSY…KWEYCNVEVC (84 aa)) is the Kringle domain. Positions 312-553 (IYGGFKSTAG…FLNWIKTTMH (242 aa)) constitute a Peptidase S1 domain. Residues histidine 360 and aspartate 409 each act as charge relay system in the active site. Serine 507 acts as the Charge relay system in catalysis.

Belongs to the peptidase S1 family. Heterodimer; disulfide-linked. Heterodimer of a 50 kDa heavy and a 27 kDa light chain linked by a disulfide bond. Post-translationally, proteolytic cleavage at Gly-23 or Met-27 can give rise to the 50 kDa heavy chain (HC) and cleavage at Arg-311 or Lys-317 can give rise to the 27 kDa light chain (LC). The HC can undergo further proteolytic cleavage giving rise to a 26 kDa fragment. The LC can undergo further proteolytic cleavage at Arg-311 leading to a 17-kDa fragment and at Arg-478 leading to a 8-kDa fragment.

It localises to the secreted. Its function is as follows. Cleaves the alpha-chain at multiple sites and the beta-chain between 'Lys-53' and 'Lys-54' but not the gamma-chain of fibrinogen and therefore does not initiate the formation of the fibrin clot and does not cause the fibrinolysis directly. It does not cleave (activate) prothrombin and plasminogen but converts the inactive single chain urinary plasminogen activator (pro-urokinase) to the active two chain form. Activates coagulation factor VII. May function as a tumor suppressor negatively regulating cell proliferation and cell migration. The chain is Factor VII-activating protease from Rattus norvegicus (Rat).